Here is an 803-residue protein sequence, read N- to C-terminus: Ras GTPase-activating protein 4B (803 aa).

C2 domains are found at residues 1-105 (MAKR…SGWA) and 116-232 (VQGE…EGWF). Positions 21, 27, 74, 76, 79, 82, 149, 155, 202, 204, 207, and 210 each coordinate Ca(2+). The 229-residue stretch at 318–546 (GLAKDFLDLL…AQLKDFITKL (229 aa)) folds into the Ras-GAP domain. Residues 566–673 (PPVKEGPLFI…WLSALRKVSI (108 aa)) form the PH domain. A Btk-type zinc finger spans residues 675 to 711 (NTGLLGSYHPGVFRGDKWSCCHQKEKTGQGCDKTRSR). Positions 683, 694, 695, and 705 each coordinate Zn(2+). Residues 781–803 (EAHSSSPAGSPPSEPNCLLELQT) form a disordered region.

Requires Ca(2+) as cofactor.

It localises to the cytoplasm. Its subcellular location is the cytosol. The protein resides in the cell membrane. Functionally, ca(2+)-dependent Ras GTPase-activating protein, that may play a role in the Ras-MAPK pathway. The chain is Ras GTPase-activating protein 4B (RASA4B) from Homo sapiens (Human).